We begin with the raw amino-acid sequence, 771 residues long: Hyperosmolality-gated Ca2+ permeable channel 1.3 (771 aa).

Residues 7 to 27 form a helical membrane-spanning segment; it reads IGVAAAINILTAIIFLLAFAI. Ser54 bears the Phosphoserine mark. The next 9 helical transmembrane spans lie at 101–121, 158–178, 375–395, 427–447, 467–487, 512–532, 584–604, 630–650, and 651–671; these read IYLI…SILV, FWTH…VLMK, LIMH…IAFV, FLPG…LMVM, YYIF…SAFE, ATFF…GEIL, PVTP…YLVF, IISA…TKGA, and AQST…HRYC. Residues 744-771 are disordered; that stretch reads VPTKRQSRINTPAVSHASRGSSRSPPSK. Over residues 751-771 the composition is skewed to polar residues; it reads RINTPAVSHASRGSSRSPPSK.

This sequence belongs to the CSC1 (TC 1.A.17) family. In terms of processing, phosphorylated at Ser-54 by BIK1 in response to pathogen-associated molecular pattern (PAMP) perception, promoting its activation. In terms of tissue distribution, preferentially expressed in guard cells.

It is found in the cell membrane. The catalysed reaction is Ca(2+)(in) = Ca(2+)(out). Activated following phosphorylation at Ser-54 by BIK1. Its function is as follows. Calcium-permeable channel that plays a key role in plant stomatal immunity. In response to pathogen-associated molecular pattern (PAMP) perception, phosphorylated and activated by BIK1, triggering rapid influx of calcium ions across the plasma membrane, leading to stomatal closure. This Arabidopsis thaliana (Mouse-ear cress) protein is Hyperosmolality-gated Ca2+ permeable channel 1.3.